The following is a 2138-amino-acid chain: Conidial yellow pigment biosynthesis polyketide synthase melA (2138 aa).

The interval 8–244 (YLFGDQTADF…TRVPIHGPYH (237 aa)) is N-terminal acylcarrier protein transacylase domain (SAT). Residues 373 to 804 (QSKIAIIGLS…GGNTALMVED (432 aa)) form the Ketosynthase family 3 (KS3) domain. Residues Cys-545, His-680, and His-722 each act as for beta-ketoacyl synthase activity in the active site. Residues 910 to 1229 (FVFTGQGAQY…VSALYMAGIE (320 aa)) form a malonyl-CoA:ACP transacylase (MAT) domain region. Ser-999 acts as the For acyl/malonyl transferase activity in catalysis. Residues 1288–1601 (SSAAQRVLET…RKILDMALPP (314 aa)) are product template (PT) domain. The N-terminal hotdog fold stretch occupies residues 1292–1423 (QRVLETSGDN…CNIKFFDPSP (132 aa)). Residues 1292 to 1596 (QRVLETSGDN…FQGLARKILD (305 aa)) enclose the PKS/mFAS DH domain. His-1324 (proton acceptor; for dehydratase activity) is an active-site residue. Residues 1451-1596 (AHRMKRGMVY…FQGLARKILD (146 aa)) are C-terminal hotdog fold. Asp-1509 serves as the catalytic Proton donor; for dehydratase activity. Residues 1640 to 1714 (PSMATRALAI…DFKHLLAQMG (75 aa)) enclose the Carrier 1 domain. Ser-1674 is modified (O-(pantetheine 4'-phosphoryl)serine). A disordered region spans residues 1712–1758 (QMGPGESSDGSSSEGDMSSAASSTDLSSPNTSGLPTPANEKSMTHGL). Positions 1713 to 1739 (MGPGESSDGSSSEGDMSSAASSTDLSS) are enriched in low complexity. Positions 1740-1758 (PNTSGLPTPANEKSMTHGL) are enriched in polar residues. Residues 1759–1836 (QGQNDSMRQI…DIETTLDLKP (78 aa)) enclose the Carrier 2 domain. Ser-1796 carries the post-translational modification O-(pantetheine 4'-phosphoryl)serine. The interval 1863 to 2135 (TQHPPATSIL…ELARFIANSM (273 aa)) is claisen cyclase domain. The active-site For Claisen cyclase activity is the Ser-1953.

The enzyme catalyses 6 malonyl-CoA + acetyl-CoA + 6 H(+) = naphtopyrone YWA1 + 6 CO2 + 7 CoA + H2O. It participates in pigment biosynthesis. The protein operates within polyketide biosynthesis; heptaketide naphthopyrone YWA1 biosynthesis. Functionally, non-reducing polyketide synthase involved in the biosynthesis of a yellow conidial pigment. Probably forms the heptaketide naphthopyrene YWA1 via condensation of acetate units. This is Conidial yellow pigment biosynthesis polyketide synthase melA from Penicillium expansum (Blue mold rot fungus).